The sequence spans 89 residues: Small ribosomal subunit protein uS15 (89 aa).

Belongs to the universal ribosomal protein uS15 family. Part of the 30S ribosomal subunit. Forms a bridge to the 50S subunit in the 70S ribosome, contacting the 23S rRNA.

Functionally, one of the primary rRNA binding proteins, it binds directly to 16S rRNA where it helps nucleate assembly of the platform of the 30S subunit by binding and bridging several RNA helices of the 16S rRNA. In terms of biological role, forms an intersubunit bridge (bridge B4) with the 23S rRNA of the 50S subunit in the ribosome. This is Small ribosomal subunit protein uS15 from Shewanella putrefaciens (strain CN-32 / ATCC BAA-453).